Reading from the N-terminus, the 125-residue chain is DNA-directed RNA polymerase II subunit RPB9 (125 aa).

Met1 carries the N-acetylmethionine modification. Zn(2+)-binding residues include Cys17, Cys20, Cys39, Cys42, Cys86, Cys89, Cys114, and Cys119. A C4-type zinc finger spans residues 17–42 (CQECNNMLYPKEDKENRILLYACRNC). The segment at 82 to 124 (EDHPCQKCGHKEAVFFQSHSARAEDAMRLYYVCTAPHCGHRWT) adopts a TFIIS-type zinc-finger fold.

It belongs to the archaeal RpoM/eukaryotic RPA12/RPB9/RPC11 RNA polymerase family. As to quaternary structure, component of the RNA polymerase II (Pol II) core complex consisting of 12 subunits: a ten-subunit catalytic core composed of POLR2A/RPB1, POLR2B/RPB2, POLR2C/RPB3, POLR2I/RPB9, POLR2J/RPB11, POLR2E/RPABC1, POLR2F/RPABC2, POLR2H/RPABC3, POLR2K/RPABC4 and POLR2L/RPABC5 and a mobile stalk composed of two subunits POLR2D/RPB4 and POLR2G/RPB7, protruding from the core and functioning primarily in transcription initiation. Part of Pol II(G) complex, in which Pol II core associates with an additional subunit POLR2M; unlike conventional Pol II, Pol II(G) functions as a transcriptional repressor. Part of TBP-based Pol II pre-initiation complex (PIC), in which Pol II core assembles with general transcription factors and other specific initiation factors including GTF2E1, GTF2E2, GTF2F1, GTF2F2, TCEA1, ERCC2, ERCC3, GTF2H2, GTF2H3, GTF2H4, GTF2H5, GTF2A1, GTF2A2, GTF2B and TBP; this large multi-subunit PIC complex mediates DNA unwinding and targets Pol II core to the transcription start site where the first phosphodiester bond forms.

Its subcellular location is the nucleus. The protein resides in the nucleolus. Its function is as follows. DNA-dependent RNA polymerase catalyzes the transcription of DNA into RNA using the four ribonucleoside triphosphates as substrates. Component of RNA polymerase II which synthesizes mRNA precursors and many functional non-coding RNAs. Pol II is the central component of the basal RNA polymerase II transcription machinery. It is composed of mobile elements that move relative to each other. POLR2I/RPB9 is part of the upper jaw surrounding the central large cleft and thought to grab the incoming DNA template. The chain is DNA-directed RNA polymerase II subunit RPB9 (POLR2I) from Bos taurus (Bovine).